The primary structure comprises 692 residues: Elongation factor G (692 aa).

The tr-type G domain occupies 8–282; sequence ENTRNIGIMA…AVIDYLPSPL (275 aa). GTP is bound by residues 17–24, 81–85, and 135–138; these read AHIDAGKT, DTPGH, and NKMD.

This sequence belongs to the TRAFAC class translation factor GTPase superfamily. Classic translation factor GTPase family. EF-G/EF-2 subfamily.

The protein resides in the cytoplasm. Catalyzes the GTP-dependent ribosomal translocation step during translation elongation. During this step, the ribosome changes from the pre-translocational (PRE) to the post-translocational (POST) state as the newly formed A-site-bound peptidyl-tRNA and P-site-bound deacylated tRNA move to the P and E sites, respectively. Catalyzes the coordinated movement of the two tRNA molecules, the mRNA and conformational changes in the ribosome. This chain is Elongation factor G, found in Bacillus cereus (strain ATCC 10987 / NRS 248).